The chain runs to 629 residues: Chaperone protein HtpG (629 aa).

The segment at 1-336 is a; substrate-binding; sequence MSSTENNGTA…TEDLSLNVSR (336 aa). A b region spans residues 337-549; the sequence is EMVQSSPVMA…KDAIDSQLER (213 aa). Residues 550–629 are c; it reads MMKMMNTPMP…ELIEAATLTR (80 aa).

The protein belongs to the heat shock protein 90 family. As to quaternary structure, homodimer.

The protein resides in the cytoplasm. Functionally, molecular chaperone. Has ATPase activity. The protein is Chaperone protein HtpG of Chlorobium chlorochromatii (strain CaD3).